The chain runs to 343 residues: Flagellar motor switch protein FliG (343 aa).

Positions 137–140 match the Part of the EHPQR-motif motif; it reads EHPQ. An M-F-X-F motif; its intrinsic flexibility is probably coupled to flagellar rotation motif is present at residues 245–248; it reads MFTF.

Belongs to the FliG family.

Its subcellular location is the cell inner membrane. It is found in the bacterial flagellum basal body. Its function is as follows. One of the proteins that forms a switch complex that is proposed to be located at the base of the basal body. This complex interacts with chemotaxis proteins (such as CheY) in addition to contacting components of the motor that determine the direction of flagellar rotation. Required for flagellum synthesis and motility. In H.pylori four flagellar switch proteins are encoded, FliG, FliM, FliN and FliY. The chain is Flagellar motor switch protein FliG from Helicobacter pylori (strain ATCC 700392 / 26695) (Campylobacter pylori).